Consider the following 149-residue polypeptide: Large ribosomal subunit protein bL17 (149 aa).

Belongs to the bacterial ribosomal protein bL17 family. As to quaternary structure, part of the 50S ribosomal subunit. Contacts protein L32.

The chain is Large ribosomal subunit protein bL17 from Kosmotoga olearia (strain ATCC BAA-1733 / DSM 21960 / TBF 19.5.1).